The chain runs to 478 residues: MNLSIQDELQLFSEELCRHLTPSFLEELAKKLGFVKRKRKFSGSELATIFIWISQRTASDSLVRLCSQLHAATGTLMSPEGLNKRFDKKAVEFLKYIFSTLWKSKLCKTSAISSTALTHFQRIRILDATIFQIPKHLASIYPGSGGCAQTAGIKIQLEYDLHSGQFLNFQVGPGKNNDKTFGTECLDTLRPGDLCIRDLGYFSLEDLDQMDQRGAYYISRLKLNHTVYIKNPSPEYFRNGTVKKQSQYIQVDLEHIMNHLKPGQTYEIKEAYIGKNQKLFTRVIIYRLTEKQIQERRKKQAYTESKKGITFSEKSKRLTGINIYVSNTPEGIVPMEQIHDFYSLRWQIEIIFKTWKSLFQIHHWQNIKQERLECHVYGRLIAIFICSSTMFKMRKLLLQKNKRELSEYKAIGMIQDHVSLLYQAIQRNTQDLTKILIRLFDLLQKNGRKSHRYERKTIFDIMGVVYEYNGFGKQKKAA.

It belongs to the transposase 11 family.

Functionally, involved in the transposition of the insertion sequence. This is Transposase for insertion sequence element IS231B from Bacillus thuringiensis subsp. berliner.